Reading from the N-terminus, the 211-residue chain is ATP phosphoribosyltransferase (211 aa).

It belongs to the ATP phosphoribosyltransferase family. Short subfamily. In terms of assembly, heteromultimer composed of HisG and HisZ subunits.

It is found in the cytoplasm. It carries out the reaction 1-(5-phospho-beta-D-ribosyl)-ATP + diphosphate = 5-phospho-alpha-D-ribose 1-diphosphate + ATP. The protein operates within amino-acid biosynthesis; L-histidine biosynthesis; L-histidine from 5-phospho-alpha-D-ribose 1-diphosphate: step 1/9. In terms of biological role, catalyzes the condensation of ATP and 5-phosphoribose 1-diphosphate to form N'-(5'-phosphoribosyl)-ATP (PR-ATP). Has a crucial role in the pathway because the rate of histidine biosynthesis seems to be controlled primarily by regulation of HisG enzymatic activity. The sequence is that of ATP phosphoribosyltransferase from Pseudomonas fluorescens (strain ATCC BAA-477 / NRRL B-23932 / Pf-5).